Here is a 636-residue protein sequence, read N- to C-terminus: DNA gyrase subunit B (636 aa).

The Toprim domain maps to 421-535 (TELFIVEGDS…QGRVYIALPP (115 aa)). Mg(2+) contacts are provided by Glu-427, Asp-500, and Asp-502.

Belongs to the type II topoisomerase GyrB family. As to quaternary structure, heterotetramer, composed of two GyrA and two GyrB chains. In the heterotetramer, GyrA contains the active site tyrosine that forms a transient covalent intermediate with DNA, while GyrB binds cofactors and catalyzes ATP hydrolysis. Mg(2+) serves as cofactor. The cofactor is Mn(2+). It depends on Ca(2+) as a cofactor.

It localises to the cytoplasm. The catalysed reaction is ATP-dependent breakage, passage and rejoining of double-stranded DNA.. In terms of biological role, a type II topoisomerase that negatively supercoils closed circular double-stranded (ds) DNA in an ATP-dependent manner to modulate DNA topology and maintain chromosomes in an underwound state. Negative supercoiling favors strand separation, and DNA replication, transcription, recombination and repair, all of which involve strand separation. Also able to catalyze the interconversion of other topological isomers of dsDNA rings, including catenanes and knotted rings. Type II topoisomerases break and join 2 DNA strands simultaneously in an ATP-dependent manner. This chain is DNA gyrase subunit B, found in Thermotoga maritima (strain ATCC 43589 / DSM 3109 / JCM 10099 / NBRC 100826 / MSB8).